Here is an 88-residue protein sequence, read N- to C-terminus: Small ribosomal subunit protein uS15 (88 aa).

A disordered region spans residues 1 to 23; that stretch reads MIASSVKAEVVKSNARSANDTGS. Polar residues predominate over residues 14–23; the sequence is NARSANDTGS.

Belongs to the universal ribosomal protein uS15 family. In terms of assembly, part of the 30S ribosomal subunit. Forms a bridge to the 50S subunit in the 70S ribosome, contacting the 23S rRNA.

Functionally, one of the primary rRNA binding proteins, it binds directly to 16S rRNA where it helps nucleate assembly of the platform of the 30S subunit by binding and bridging several RNA helices of the 16S rRNA. In terms of biological role, forms an intersubunit bridge (bridge B4) with the 23S rRNA of the 50S subunit in the ribosome. The protein is Small ribosomal subunit protein uS15 of Delftia acidovorans (strain DSM 14801 / SPH-1).